The sequence spans 174 residues: MAEKRNIFLVGPMGAGKSTIGRHLAQQLHMEFIDSDTVIEERTGADIAWVFDVEGEEGFRKREEAVINDLTEQQGIVLATGGGSVISKENRNRLSARGIVVYLETTIEKQLARTNRDKKRPLLQTDCPREVLEQLAEDRNPLYEEIADITVRTDDQSAKVVANQIVKMLEEHIM.

Position 14–19 (Gly-14–Thr-19) interacts with ATP. Ser-18 lines the Mg(2+) pocket. Residues Asp-36, Arg-60, and Gly-82 each coordinate substrate. Residue Arg-120 coordinates ATP. Arg-139 is a binding site for substrate. Gln-156 contacts ATP.

This sequence belongs to the shikimate kinase family. Monomer. It depends on Mg(2+) as a cofactor.

It is found in the cytoplasm. It catalyses the reaction shikimate + ATP = 3-phosphoshikimate + ADP + H(+). Its pathway is metabolic intermediate biosynthesis; chorismate biosynthesis; chorismate from D-erythrose 4-phosphate and phosphoenolpyruvate: step 5/7. Functionally, catalyzes the specific phosphorylation of the 3-hydroxyl group of shikimic acid using ATP as a cosubstrate. The polypeptide is Shikimate kinase (Vibrio cholerae serotype O1 (strain ATCC 39541 / Classical Ogawa 395 / O395)).